Here is a 253-residue protein sequence, read N- to C-terminus: REF/SRPP-like protein Os05g0151300/LOC_Os05g05940 (253 aa).

The interval 1-26 (MADSGSDAPISNRPEEEVTVEKTPEM) is disordered. A compositionally biased stretch (basic and acidic residues) spans 13–26 (RPEEEVTVEKTPEM).

It belongs to the REF/SRPP family.

This Oryza sativa subsp. japonica (Rice) protein is REF/SRPP-like protein Os05g0151300/LOC_Os05g05940.